A 221-amino-acid polypeptide reads, in one-letter code: Phosphoenolpyruvate guanylyltransferase (221 aa).

Phosphoenolpyruvate contacts are provided by Thr154, Gly169, and Ser172.

Belongs to the CofC family.

The enzyme catalyses phosphoenolpyruvate + GTP + H(+) = enolpyruvoyl-2-diphospho-5'-guanosine + diphosphate. Its pathway is cofactor biosynthesis; coenzyme F420 biosynthesis. Its function is as follows. Guanylyltransferase that catalyzes the activation of phosphoenolpyruvate (PEP) as enolpyruvoyl-2-diphospho-5'-guanosine, via the condensation of PEP with GTP. It is involved in the biosynthesis of coenzyme F420, a hydride carrier cofactor. This chain is Phosphoenolpyruvate guanylyltransferase, found in Mycolicibacterium smegmatis (strain ATCC 700084 / mc(2)155) (Mycobacterium smegmatis).